Reading from the N-terminus, the 271-residue chain is Auxin-responsive protein IAA5 (271 aa).

The disordered stretch occupies residues 1–96 (MSPPLEPHDY…RHGASSGSVA (96 aa)). 2 stretches are compositionally biased toward low complexity: residues 14-33 (SAAA…SPNP) and 40-50 (PRLTLRLGLPG). The short motif at 44–48 (LRLGL) is the EAR-like (transcriptional repression) element. A PB1 domain is found at 151–255 (PLYVKVSMDG…RKLKIMRGSD (105 aa)).

This sequence belongs to the Aux/IAA family. Homodimers and heterodimers.

It localises to the nucleus. Functionally, aux/IAA proteins are short-lived transcriptional factors that function as repressors of early auxin response genes at low auxin concentrations. The chain is Auxin-responsive protein IAA5 (IAA5) from Oryza sativa subsp. japonica (Rice).